The chain runs to 160 residues: RNA pyrophosphohydrolase (160 aa).

A Nudix hydrolase domain is found at 10-154; it reads PYRPCVGVML…KRDVYVAVLD (145 aa). The Nudix box motif lies at 44–65; sequence GGVEKGEDPRAAALRELWEETG.

Belongs to the Nudix hydrolase family. RppH subfamily. Requires a divalent metal cation as cofactor.

In terms of biological role, accelerates the degradation of transcripts by removing pyrophosphate from the 5'-end of triphosphorylated RNA, leading to a more labile monophosphorylated state that can stimulate subsequent ribonuclease cleavage. This chain is RNA pyrophosphohydrolase, found in Roseobacter denitrificans (strain ATCC 33942 / OCh 114) (Erythrobacter sp. (strain OCh 114)).